The chain runs to 456 residues: GTPase Der (456 aa).

EngA-type G domains lie at 4-169 (PIVA…PSKE) and 178-353 (IQLA…EQHR). Residues 10–17 (GRPNVGKS), 57–61 (DTGGL), 120–123 (NKCE), 184–191 (GRPNVGKS), 231–235 (DTAGI), and 296–299 (NKWD) contribute to the GTP site. The KH-like domain maps to 354-439 (RRVSTSVVNE…PLKLFWRGKQ (86 aa)).

Belongs to the TRAFAC class TrmE-Era-EngA-EngB-Septin-like GTPase superfamily. EngA (Der) GTPase family. In terms of assembly, associates with the 50S ribosomal subunit.

Its function is as follows. GTPase that plays an essential role in the late steps of ribosome biogenesis. In Prochlorococcus marinus (strain MIT 9211), this protein is GTPase Der.